The following is a 101-amino-acid chain: Phosphoribosyl-ATP pyrophosphatase (101 aa).

This sequence belongs to the PRA-PH family.

The protein resides in the cytoplasm. The catalysed reaction is 1-(5-phospho-beta-D-ribosyl)-ATP + H2O = 1-(5-phospho-beta-D-ribosyl)-5'-AMP + diphosphate + H(+). It participates in amino-acid biosynthesis; L-histidine biosynthesis; L-histidine from 5-phospho-alpha-D-ribose 1-diphosphate: step 2/9. The protein is Phosphoribosyl-ATP pyrophosphatase of Natronomonas pharaonis (strain ATCC 35678 / DSM 2160 / CIP 103997 / JCM 8858 / NBRC 14720 / NCIMB 2260 / Gabara) (Halobacterium pharaonis).